Here is a 781-residue protein sequence, read N- to C-terminus: Potassium transporter 5 (781 aa).

A compositionally biased stretch (polar residues) spans 1 to 11 (MTEPLHTSSNG). The interval 1–24 (MTEPLHTSSNGGAERGPNAAFESE) is disordered. Topologically, residues 1–63 (MTEPLHTSSN…AKVGWATTLH (63 aa)) are cytoplasmic. Residues 64–84 (LAFQSIGVVYGDMGTSPLYVF) traverse the membrane as a helical segment. Residues 85–100 (SSTFTNGIKDTNDILG) lie on the Extracellular side of the membrane. A helical membrane pass occupies residues 101–121 (VMSLIIYTVVLLPLIKYCFIV). At 122 to 187 (LRANDNGDGG…EKMENSPNFK (66 aa)) the chain is on the cytoplasmic side. The helical transmembrane segment at 188-208 (IILFLVTILATSMVIGDGVLT) threads the bilayer. Residues 209–225 (PCISVLSAVGGIKESAK) are Extracellular-facing. Residues 226 to 246 (SLTQGQIAGIAIAILIVLFLV) traverse the membrane as a helical segment. Topologically, residues 247 to 257 (QRFGTDKVGYS) are cytoplasmic. The chain crosses the membrane as a helical span at residues 258–278 (FGPIILTWFIFIAGTGVYNLF). The Extracellular portion of the chain corresponds to 279 to 304 (KHDTGVLKAFNPKYIVDYFERNGKQG). A helical membrane pass occupies residues 305-325 (WISLGGVILCITGTEAMFADL). Over 326-334 (GHFNVRAIQ) the chain is Cytoplasmic. A helical transmembrane segment spans residues 335–355 (IGFSVVLLPSVLLAYIGQAAY). The Extracellular segment spans residues 356–381 (LRIYPEHVADTFYKSIPDPLYWPTFV). A helical transmembrane segment spans residues 382–402 (VAVAAAIIASQAMISGAFAII). Residues 403 to 426 (AQSQILGCFPRVRVIHTSTKFHGQ) are Cytoplasmic-facing. A helical membrane pass occupies residues 427–447 (VYIPEINYVLMVLCVAVTAIF). Residues 448–458 (QTTDKIGNAYG) are Extracellular-facing. Residues 459 to 479 (IAVVFVMFITTLLVTLVMVMI) form a helical membrane-spanning segment. Residues 480-481 (WK) lie on the Cytoplasmic side of the membrane. The chain crosses the membrane as a helical span at residues 482 to 502 (TSLLWIALFPVIFGGAELIYL). Topologically, residues 503–512 (SSAFYKFTQG) are extracellular. A helical transmembrane segment spans residues 513-533 (GYLPLVFSAILMFIMATWHYV). Over 534–781 (HVHRYKYELR…LLRVGMTYEI (248 aa)) the chain is Cytoplasmic. The tract at residues 681-707 (VTDPTSEVQDAMSSRNNSDQHTTEPRN) is disordered. Residues 683 to 700 (DPTSEVQDAMSSRNNSDQ) are compositionally biased toward polar residues.

This sequence belongs to the HAK/KUP transporter (TC 2.A.72.3) family. Expressed in root epidermis, parenchyma of stele tissue and primordial of the lateral root, root-shoot junctions and leaf sheaths. Expressed in germinated embryonic tissue, young tillers, flower organs and pedicels.

Its subcellular location is the cell membrane. It carries out the reaction K(+)(in) = K(+)(out). Functionally, high-affinity potassium transporter. Its potassium transporter activity does not seem to be affected by high sodium and low potassium concentrations in the extracellular environment. Invloved in salt stress tolerance by enhancing root potassium uptake and translocation to the shoot to prevent sodium influx during salt stress. Involved in the positive regulation of disease resistance against the rice grassy stunt virus by promoting potassium transport and increasing endogenous plant potassium. The polypeptide is Potassium transporter 5 (HAK5) (Oryza sativa subsp. japonica (Rice)).